The primary structure comprises 223 residues: Protein-lysine N-methyltransferase CG9154 (223 aa).

It belongs to the class I-like SAM-binding methyltransferase superfamily. EFM5 family.

Its subcellular location is the cytoplasm. Its function is as follows. S-adenosyl-L-methionine-dependent protein-lysine N-methyltransferase that methylates elongation factor 1-alpha. In Drosophila melanogaster (Fruit fly), this protein is Protein-lysine N-methyltransferase CG9154.